A 239-amino-acid chain; its full sequence is Phosphoribosylaminoimidazole-succinocarboxamide synthase (239 aa).

The protein belongs to the SAICAR synthetase family.

It carries out the reaction 5-amino-1-(5-phospho-D-ribosyl)imidazole-4-carboxylate + L-aspartate + ATP = (2S)-2-[5-amino-1-(5-phospho-beta-D-ribosyl)imidazole-4-carboxamido]succinate + ADP + phosphate + 2 H(+). It participates in purine metabolism; IMP biosynthesis via de novo pathway; 5-amino-1-(5-phospho-D-ribosyl)imidazole-4-carboxamide from 5-amino-1-(5-phospho-D-ribosyl)imidazole-4-carboxylate: step 1/2. This Psychrobacter sp. (strain PRwf-1) protein is Phosphoribosylaminoimidazole-succinocarboxamide synthase.